A 277-amino-acid polypeptide reads, in one-letter code: uncharacterized protein (277 aa).

An N-terminal signal peptide occupies residues 1–25; that stretch reads MNKKSIWSKTAFGSLFLLLGTAFTA. A lipid anchor (N-palmitoyl cysteine) is attached at Cys26. A lipid anchor (S-diacylglycerol cysteine) is attached at Cys26.

Belongs to the MG439/MG440 family.

The protein localises to the cell membrane. This is an uncharacterized protein from Mycoplasma pneumoniae (strain ATCC 29342 / M129 / Subtype 1) (Mycoplasmoides pneumoniae).